The sequence spans 213 residues: Bcl-2-related ovarian killer protein (213 aa).

Residues 32–44 (KALCRDYINSRLI) carry the BH4 motif. The BH3 signature appears at 67-83 (VSAILLRLGDELEYIRP). Residues 113–132 (QIFTAGITWGKVVSLYAVAA) carry the BH1 motif. The BH2 motif lies at 165–179 (WLKRRGGWADITKCV). Residues 190-210 (WLVAAVCSFGHFLKAIFFVLL) form a helical membrane-spanning segment.

This sequence belongs to the Bcl-2 family.

The protein localises to the membrane. Its function is as follows. May play a role in apoptosis. This chain is Bcl-2-related ovarian killer protein, found in Gallus gallus (Chicken).